Reading from the N-terminus, the 462-residue chain is Argininosuccinate lyase (462 aa).

It belongs to the lyase 1 family. Argininosuccinate lyase subfamily.

It is found in the cytoplasm. It carries out the reaction 2-(N(omega)-L-arginino)succinate = fumarate + L-arginine. Its pathway is amino-acid biosynthesis; L-arginine biosynthesis; L-arginine from L-ornithine and carbamoyl phosphate: step 3/3. This Xanthobacter autotrophicus (strain ATCC BAA-1158 / Py2) protein is Argininosuccinate lyase.